A 209-amino-acid polypeptide reads, in one-letter code: Ribonuclease HII (209 aa).

The region spanning 19–209 (CTIVGVDEVG…ASGITKLYNK (191 aa)) is the RNase H type-2 domain. Asp-25, Glu-26, and Asp-118 together coordinate a divalent metal cation.

Belongs to the RNase HII family. Mn(2+) is required as a cofactor. Mg(2+) serves as cofactor.

It is found in the cytoplasm. It carries out the reaction Endonucleolytic cleavage to 5'-phosphomonoester.. Functionally, endonuclease that specifically degrades the RNA of RNA-DNA hybrids. This chain is Ribonuclease HII, found in Ehrlichia chaffeensis (strain ATCC CRL-10679 / Arkansas).